The primary structure comprises 597 residues: Probable translation initiation factor IF-2 (597 aa).

Positions 10–226 (LRTPIVAVLG…LMGLSQRFMK (217 aa)) constitute a tr-type G domain. Positions 19 to 26 (GHVDHGKT) are G1. 19–26 (GHVDHGKT) contributes to the GTP binding site. Residues 44 to 48 (AITQH) form a G2 region. Residues 81–84 (DTPG) form a G3 region. Residues 81 to 85 (DTPGH) and 135 to 138 (NKVD) contribute to the GTP site. The tract at residues 135-138 (NKVD) is G4. A G5 region spans residues 203–205 (SAI).

It belongs to the TRAFAC class translation factor GTPase superfamily. Classic translation factor GTPase family. IF-2 subfamily.

In terms of biological role, function in general translation initiation by promoting the binding of the formylmethionine-tRNA to ribosomes. Seems to function along with eIF-2. This is Probable translation initiation factor IF-2 from Halorubrum lacusprofundi (strain ATCC 49239 / DSM 5036 / JCM 8891 / ACAM 34).